The primary structure comprises 90 residues: Accessory gland-specific peptide 26Ab (90 aa).

Residues 1–21 (MNYFAVLCIFSCICLWQFSDA) form the signal peptide.

Main cells of the accessory glands of males.

The protein resides in the secreted. It is found in the extracellular space. In terms of biological role, this protein is transferred from male to female during mating and may affect egglaying and behavior after mating. The protein is Accessory gland-specific peptide 26Ab (Acp26Ab) of Drosophila mauritiana (Fruit fly).